The sequence spans 610 residues: UvrABC system protein C (610 aa).

A GIY-YIG domain is found at 16 to 94 (SQPGVYRMYD…IKLYQPRYNV (79 aa)). The region spanning 204 to 239 (DQVLTQLIARMEKASQDLAFEEAARIRDQIQAVRRV) is the UVR domain.

This sequence belongs to the UvrC family. In terms of assembly, interacts with UvrB in an incision complex.

Its subcellular location is the cytoplasm. The UvrABC repair system catalyzes the recognition and processing of DNA lesions. UvrC both incises the 5' and 3' sides of the lesion. The N-terminal half is responsible for the 3' incision and the C-terminal half is responsible for the 5' incision. The protein is UvrABC system protein C of Salmonella enteritidis PT4 (strain P125109).